The chain runs to 204 residues: Superoxide dismutase [Mn] (204 aa).

Residue His27 coordinates Mn(2+). 2 positions are modified to phosphothreonine: Thr34 and Thr70. The Mn(2+) site is built by His82, Asp164, and His168.

It belongs to the iron/manganese superoxide dismutase family. Homodimer. Mn(2+) serves as cofactor.

The catalysed reaction is 2 superoxide + 2 H(+) = H2O2 + O2. In terms of biological role, destroys superoxide anion radicals which are normally produced within the cells and which are toxic to biological systems. The polypeptide is Superoxide dismutase [Mn] (sodA) (Bacillus caldotenax).